The primary structure comprises 423 residues: GTPase HflX (423 aa).

The Hflx-type G domain occupies 201–363 (IQLALVGYTN…KIEQALKGMM (163 aa)). GTP is bound by residues 207-214 (GYTNAGKS), 232-236 (FATLD), 254-257 (DTVG), 320-323 (NKAD), and 341-343 (SAY). Ser-214 and Thr-234 together coordinate Mg(2+).

Belongs to the TRAFAC class OBG-HflX-like GTPase superfamily. HflX GTPase family. Monomer. Associates with the 50S ribosomal subunit. Requires Mg(2+) as cofactor.

It localises to the cytoplasm. GTPase that associates with the 50S ribosomal subunit and may have a role during protein synthesis or ribosome biogenesis. This Alkalihalophilus pseudofirmus (strain ATCC BAA-2126 / JCM 17055 / OF4) (Bacillus pseudofirmus) protein is GTPase HflX.